Consider the following 246-residue polypeptide: E3 ubiquitin ligase TRIM40 (246 aa).

The RING-type zinc finger occupies 12–55 (CPICLDPLKEAVSTDCRHLFCRMCLTQHMDKASVSGILSCPVCR). The segment at 64–105 (GDNYICHTHQKRVRRFCEASGHLLCEECLQSPEHQSHTELSI) adopts a B box-type zinc-finger fold. The Zn(2+) site is built by cysteine 69, histidine 72, cysteine 91, and histidine 97. A coiled-coil region spans residues 105-170 (IENAISHYKE…DQTKEQLKAL (66 aa)).

This sequence belongs to the TRIM/RBCC family. Interacts with NEDD8.

The catalysed reaction is S-ubiquitinyl-[E2 ubiquitin-conjugating enzyme]-L-cysteine + [acceptor protein]-L-lysine = [E2 ubiquitin-conjugating enzyme]-L-cysteine + N(6)-ubiquitinyl-[acceptor protein]-L-lysine.. Functionally, E3 ubiquitin-protein ligase that plays a role in the limitation of the innate immune response. Mediates inhibition of the RLR signaling pathway by ubiquitinating RIGI and IFIH1 receptors, leading to their proteasomal degradation. Also promotes the neddylation of IKBKG/NEMO, stabilizing NFKBIA, and thereby inhibiting of NF-kappa-B nuclear translocation and activation. The polypeptide is E3 ubiquitin ligase TRIM40 (Trim40) (Mus musculus (Mouse)).